A 240-amino-acid chain; its full sequence is Large ribosomal subunit protein uL1 (240 aa).

The protein belongs to the universal ribosomal protein uL1 family. In terms of assembly, part of the 50S ribosomal subunit.

In terms of biological role, binds directly to 23S rRNA. The L1 stalk is quite mobile in the ribosome, and is involved in E site tRNA release. Functionally, protein L1 is also a translational repressor protein, it controls the translation of the L11 operon by binding to its mRNA. This is Large ribosomal subunit protein uL1 from Streptomyces griseus subsp. griseus (strain JCM 4626 / CBS 651.72 / NBRC 13350 / KCC S-0626 / ISP 5235).